We begin with the raw amino-acid sequence, 27 residues long: NVLVPPCSGCYSQSGNTCYYDVYKCPS.

P6 is subject to Hydroxyproline. Disulfide bonds link C7-C18 and C10-C25.

Functionally, has analgesic and anti-inflammatory activity in vivo. At a dose of 0.1 and 1 mg/kg, exhibits anti-inflammatory activity by reducing the volume of edema during 24 h better than the nonsteroidal anti-inflammatory drug, Diclofenac, at dose of 1 mg/kg in a mouse model of acute local lambda-carrageenan-induced inflammation. At a dose of 1 mg/kg, reduces the content of tumor necrosis factor-alpha (TNF-alpha). Demonstrates a significant analgesic effect on acute pain sensitivity in the carrageenan-induced thermal hyperalgesia model at doses of 0.1 and 1 mg/kg. Not toxic in mice, however stimulates exploratory motivation and active search behavior, and demonstrates an anti-anxiety effect. Does not exhibit any effect on currents of rat acid-sensing ion channels ASIC1a or ASIC3. The polypeptide is AnmTX Sco 9a-1 (Stomphia coccinea (Spotted swimming anemone)).